Reading from the N-terminus, the 622-residue chain is Probable potassium transport system protein Kup (622 aa).

The next 12 helical transmembrane spans lie at 8-28 (LAALTLGAIGVVYGDIGTSVL), 50-70 (VLSILFWTLTTIVSLKYVVLV), 103-123 (LGIGVFGTSLFYGDGVITPAI), 137-157 (PHFGKAVIPLTLIVLFCLFAV), 169-189 (FGPVTLVWFTSIAALGVPHIV), 215-235 (FIILGAVVLCVTGAEALYADL), 247-267 (WFSVAMPALTINYFGQGALLL), 285-305 (ALIPLVIMATMATVIASQALI), 337-357 (IYIPFVNWALFLAIVLAVVMF), 366-386 (AYGIAVTLDMLITTVLTFFVI), 393-413 (PLALCIAATGFFFLVDLAFFG), and 419-439 (LLQGGWFPLMIGSIVFMLMMT).

It belongs to the HAK/KUP transporter (TC 2.A.72) family.

It is found in the cell inner membrane. The catalysed reaction is K(+)(in) + H(+)(in) = K(+)(out) + H(+)(out). In terms of biological role, transport of potassium into the cell. Likely operates as a K(+):H(+) symporter. This chain is Probable potassium transport system protein Kup, found in Paracidovorax citrulli (strain AAC00-1) (Acidovorax citrulli).